Reading from the N-terminus, the 149-residue chain is Large ribosomal subunit protein bL9 (149 aa).

This sequence belongs to the bacterial ribosomal protein bL9 family.

Its function is as follows. Binds to the 23S rRNA. The chain is Large ribosomal subunit protein bL9 from Chromobacterium violaceum (strain ATCC 12472 / DSM 30191 / JCM 1249 / CCUG 213 / NBRC 12614 / NCIMB 9131 / NCTC 9757 / MK).